The sequence spans 1040 residues: MQVLPPGSTGGPSRLFILRPVATTLLMAAILLAGIIGYRFLPVAALPEVDYPTIQVVTLYPGASPDVMTSAVTAPLERQFGQMSGLKQMSSQSSGGASVVTLQFQLTLPLDVAEQEVQAAINAATNLLPSDLPNPPIYSKVNPADPPIMTLAVTSNAMPMTQVEDMVETRVAQKISQVSGVGLVTLAGGQRPAVRVKLNAQAVAALGLTSETVRTAITGANVNSAKGSLDGPERAVTLSANDQMQSADEYRRLIIAYQNGAPVRLGDVATVEQGAENSWLGAWANQAPAIVMNVQRQPGANIIATADSIRQMLPQLTESLPKSVKVTVLSDRTTNIRASVRDTQFELMLAIALVVMIIYLFLRNIPATIIPGVAVPLSLIGTFAVMVFLDFSINNLTLMALTIATGFVVDDAIVVIENISRYIEKGEKPLAAALKGAGEIGFTIISLTFSLIAVLIPLLFMGDIVGRLFREFAVTLAVAILISAVVSLTLTPMMCARMLSQQSLRKQNRFSRACERMFDRVIASYGRGLAKVLNHPWLTLSVAFATLLLSVMLWIVIPKGFFPVQDNGIIQGTLQAPQSSSYASMAQRQRQVAERILQDPAVQSLTTFVGVDGANSTLNSTRLQINLKPLDARDDRVQQVISRLQTAVATIPGVALYLQPTQDLTIDTQVSRTQYQFSLQATTLDALSHWVPKLQNALQSLPQLSEVSSDWQDRGLAAWVNVDRDSASRLGISMADVDNALYNAFGQRLISTIYTQANQYRVVLEHNTASTPGLAALETIRLTSRDGGTVPLSAIARIEQRFAPLSINHLDQFPITTFSFNVPEGYSLDDAVQAILDTEKTLALPADITTQFQGSTLAFQAALGSTVWLIVAAVVAMYIVLGVLYESFIHPITILSTLPTAGVGALLALIIAGSELDIIAIIGIILLIGIVKKNAIMMIDFALAAEREQGMSPRDAIFQACLLRFRPILMTTLAALLGALPLMLSTGVGAELRRPLGIAMVGGLLVSQVLTLFTTPVIYLLFDRLSLYVKSRFPRHKEEA.

A run of 12 helical transmembrane segments spans residues 25–45, 347–367, 369–389, 396–416, 440–460, 472–492, 537–557, 863–883, 888–908, 910–930, 968–988, and 998–1018; these read LLMAAILLAGIIGYRFLPVAA, LMLAIALVVMIIYLFLRNIPA, IIPGVAVPLSLIGTFAVMVFL, LTLMALTIATGFVVDDAIVVI, IGFTIISLTFSLIAVLIPLLF, FAVTLAVAILISAVVSLTLTP, WLTLSVAFATLLLSVMLWIVI, LGSTVWLIVAAVVAMYIVLGV, FIHPITILSTLPTAGVGALLA, IIAGSELDIIAIIGIILLIGI, ILMTTLAALLGALPLMLSTGV, and IAMVGGLLVSQVLTLFTTPVI.

It belongs to the resistance-nodulation-cell division (RND) (TC 2.A.6) family. MdtB subfamily. Part of a tripartite efflux system composed of MdtA, MdtB and MdtC. MdtB forms a heteromultimer with MdtC.

It is found in the cell inner membrane. The protein is Multidrug resistance protein MdtB of Salmonella choleraesuis (strain SC-B67).